Reading from the N-terminus, the 290-residue chain is 33 kDa chaperonin (290 aa).

2 disulfides stabilise this stretch: cysteine 235–cysteine 237 and cysteine 268–cysteine 271.

This sequence belongs to the HSP33 family. In terms of processing, under oxidizing conditions two disulfide bonds are formed involving the reactive cysteines. Under reducing conditions zinc is bound to the reactive cysteines and the protein is inactive.

It localises to the cytoplasm. In terms of biological role, redox regulated molecular chaperone. Protects both thermally unfolding and oxidatively damaged proteins from irreversible aggregation. Plays an important role in the bacterial defense system toward oxidative stress. The sequence is that of 33 kDa chaperonin from Streptococcus pyogenes serotype M18 (strain MGAS8232).